Consider the following 244-residue polypeptide: MEKTEESVGIRVYTATPPQKPSPSPPSRSPKPVLISSLPSLPSGAAAGGGRGRKRRMVAQGVQKTVSKTSMLVNFLPTGTLLMFEMVLPSIYRDGDCNGINTLMIHLLLLLCAMSCFFFHFTDSFKASDGKIYYGFVTPRGLAVFMKPPPPEFGGGDVIAEAEIPVTDDRYKLTVNDFVHAVMSVLVFMAIAFSDRRVTGCLFPGKEKEMDQVMESFPIMVGIVCSALFLVFPTTRYGVGCMTG.

Residues 1–56 (MEKTEESVGIRVYTATPPQKPSPSPPSRSPKPVLISSLPSLPSGAAAGGGRGRKRR) form a disordered region. Pro residues predominate over residues 18-29 (PQKPSPSPPSRS). Positions 30-45 (PKPVLISSLPSLPSGA) are enriched in low complexity. Transmembrane regions (helical) follow at residues 71–91 (MLVN…LPSI), 99–119 (GINT…CFFF), 173–193 (LTVN…AIAF), and 213–233 (VMES…LVFP).

Belongs to the plant DMP1 protein family. In terms of tissue distribution, restricted to flowers and pollen.

Its subcellular location is the endoplasmic reticulum membrane. It localises to the vacuole membrane. In terms of biological role, involved in membrane remodeling. The chain is Protein DMP9 from Arabidopsis thaliana (Mouse-ear cress).